The chain runs to 259 residues: Cell division protein FtsQ (259 aa).

At 1 to 15 (MTRDQTATFGRHALR) the chain is on the cytoplasmic side. The chain crosses the membrane as a helical span at residues 16–36 (VAGSGLLVAGVVALGLLGWQW). Residues 37 to 259 (RANVTVDRVA…VVTRTRPLDG (223 aa)) are Periplasmic-facing. The POTRA domain maps to 40–109 (VTVDRVAVTG…GALTISVTER (70 aa)).

Belongs to the FtsQ/DivIB family. FtsQ subfamily.

The protein localises to the cell inner membrane. Its function is as follows. Essential cell division protein. This chain is Cell division protein FtsQ, found in Salinibacter ruber (strain DSM 13855 / M31).